A 225-amino-acid chain; its full sequence is PKHD-type hydroxylase YbiX (225 aa).

The 100-residue stretch at 78-177 (TLSTPLFNRY…RVASFMWIQS (100 aa)) folds into the Fe2OG dioxygenase domain. Fe cation contacts are provided by histidine 96, aspartate 98, and histidine 158. 2-oxoglutarate is bound at residue arginine 168.

Fe(2+) is required as a cofactor. L-ascorbate serves as cofactor.

In Escherichia coli (strain SMS-3-5 / SECEC), this protein is PKHD-type hydroxylase YbiX.